A 101-amino-acid polypeptide reads, in one-letter code: Chaperone modulatory protein CbpM (101 aa).

The protein belongs to the CbpM family.

Interacts with CbpA and inhibits both the DnaJ-like co-chaperone activity and the DNA binding activity of CbpA. Together with CbpA, modulates the activity of the DnaK chaperone system. Does not inhibit the co-chaperone activity of DnaJ. The chain is Chaperone modulatory protein CbpM from Pseudomonas putida (strain ATCC 700007 / DSM 6899 / JCM 31910 / BCRC 17059 / LMG 24140 / F1).